A 446-amino-acid chain; its full sequence is Bifunctional protein GlmU (446 aa).

Residues 1-226 (MLAVAILAAG…PDEVNGINDR (226 aa)) form a pyrophosphorylase region. UDP-N-acetyl-alpha-D-glucosamine-binding positions include 7–10 (LAAG), Lys21, Gln73, and 78–79 (GT). Asp103 provides a ligand contact to Mg(2+). UDP-N-acetyl-alpha-D-glucosamine contacts are provided by Gly140, Glu155, Asn170, and Asn224. Asn224 lines the Mg(2+) pocket. A linker region spans residues 227 to 247 (CQLANCEALLQERLRNYWMKE). The tract at residues 248–446 (GVTFTDPASC…SKQLIKNGWQ (199 aa)) is N-acetyltransferase. 2 residues coordinate UDP-N-acetyl-alpha-D-glucosamine: Arg329 and Lys347. Residue His359 is the Proton acceptor of the active site. Residues Tyr362 and Asn373 each contribute to the UDP-N-acetyl-alpha-D-glucosamine site. Acetyl-CoA contacts are provided by residues Ala376, 382 to 383 (NY), Ala419, and Arg436.

It in the N-terminal section; belongs to the N-acetylglucosamine-1-phosphate uridyltransferase family. In the C-terminal section; belongs to the transferase hexapeptide repeat family. In terms of assembly, homotrimer. It depends on Mg(2+) as a cofactor.

It localises to the cytoplasm. The catalysed reaction is alpha-D-glucosamine 1-phosphate + acetyl-CoA = N-acetyl-alpha-D-glucosamine 1-phosphate + CoA + H(+). The enzyme catalyses N-acetyl-alpha-D-glucosamine 1-phosphate + UTP + H(+) = UDP-N-acetyl-alpha-D-glucosamine + diphosphate. The protein operates within nucleotide-sugar biosynthesis; UDP-N-acetyl-alpha-D-glucosamine biosynthesis; N-acetyl-alpha-D-glucosamine 1-phosphate from alpha-D-glucosamine 6-phosphate (route II): step 2/2. Its pathway is nucleotide-sugar biosynthesis; UDP-N-acetyl-alpha-D-glucosamine biosynthesis; UDP-N-acetyl-alpha-D-glucosamine from N-acetyl-alpha-D-glucosamine 1-phosphate: step 1/1. It functions in the pathway bacterial outer membrane biogenesis; LPS lipid A biosynthesis. In terms of biological role, catalyzes the last two sequential reactions in the de novo biosynthetic pathway for UDP-N-acetylglucosamine (UDP-GlcNAc). The C-terminal domain catalyzes the transfer of acetyl group from acetyl coenzyme A to glucosamine-1-phosphate (GlcN-1-P) to produce N-acetylglucosamine-1-phosphate (GlcNAc-1-P), which is converted into UDP-GlcNAc by the transfer of uridine 5-monophosphate (from uridine 5-triphosphate), a reaction catalyzed by the N-terminal domain. This is Bifunctional protein GlmU from Prochlorococcus marinus (strain MIT 9313).